A 191-amino-acid chain; its full sequence is Fe/S biogenesis protein NfuA (191 aa).

Residues Cys-149 and Cys-152 each coordinate [4Fe-4S] cluster.

The protein belongs to the NfuA family. As to quaternary structure, homodimer. The cofactor is [4Fe-4S] cluster.

Functionally, involved in iron-sulfur cluster biogenesis. Binds a 4Fe-4S cluster, can transfer this cluster to apoproteins, and thereby intervenes in the maturation of Fe/S proteins. Could also act as a scaffold/chaperone for damaged Fe/S proteins. The chain is Fe/S biogenesis protein NfuA from Salmonella paratyphi A (strain ATCC 9150 / SARB42).